The chain runs to 495 residues: Meiosis-specific nuclear structural protein 1 (495 aa).

The tract at residues 1-314 is interaction with BBOF1; the sequence is MGSKRRNLSC…KLEEMLRQRE (314 aa). A coiled-coil region spans residues 28-410; the sequence is VQALKNVNSQ…QLEHRRAVEK (383 aa). Tyrosine 188 bears the Phosphotyrosine mark.

It belongs to the MNS1 family. Able to form oligomers. Microtubule inner protein component of sperm flagellar doublet microtubules. Interacts with ODAD1. Interacts with BBOF1. Expressed in nasal respiratory epithelium and in the sperm.

The protein localises to the nucleus. Its subcellular location is the cytoplasm. It is found in the cytoskeleton. It localises to the cilium axoneme. The protein resides in the flagellum axoneme. Microtubule inner protein (MIP) part of the dynein-decorated doublet microtubules (DMTs) in cilia axoneme, which is required for motile cilia beating. May play a role in the control of meiotic division and germ cell differentiation through regulation of pairing and recombination during meiosis. Required for sperm flagella assembly. May play a role in the assembly and function of the outer dynein arm-docking complex (ODA-DC). ODA-DC mediates outer dynein arms (ODA) binding onto the axonemal doublet microtubules. The protein is Meiosis-specific nuclear structural protein 1 of Homo sapiens (Human).